Here is a 249-residue protein sequence, read N- to C-terminus: Uroplakin-3b-like protein 1 (249 aa).

The N-terminal stretch at 1–26 (MGPHGKQSVLRMPLLLLLTCVQSGTG) is a signal peptide. The Extracellular segment spans residues 27 to 194 (LESINYAPQL…PGSQGKGTVV (168 aa)). N-linked (GlcNAc...) asparagine glycans are attached at residues Asn-63, Asn-82, and Asn-133. A helical membrane pass occupies residues 195-215 (IIAFLSILLAILLVVFLVLVI). Topologically, residues 216-249 (SACLSTSGSSPEEQVRMRHYHTHHMGSLRAERSS) are cytoplasmic.

The protein belongs to the uroplakin-3 family.

The protein localises to the membrane. This Mus musculus (Mouse) protein is Uroplakin-3b-like protein 1.